Here is a 434-residue protein sequence, read N- to C-terminus: Histidinol dehydrogenase (434 aa).

Residues tyrosine 130, glutamine 191, and asparagine 214 each coordinate NAD(+). 3 residues coordinate substrate: serine 237, glutamine 259, and histidine 262. Residues glutamine 259 and histidine 262 each contribute to the Zn(2+) site. Catalysis depends on proton acceptor residues glutamate 327 and histidine 328. 4 residues coordinate substrate: histidine 328, aspartate 361, glutamate 415, and histidine 420. A Zn(2+)-binding site is contributed by aspartate 361. Histidine 420 serves as a coordination point for Zn(2+).

Belongs to the histidinol dehydrogenase family. Requires Zn(2+) as cofactor.

The catalysed reaction is L-histidinol + 2 NAD(+) + H2O = L-histidine + 2 NADH + 3 H(+). Its pathway is amino-acid biosynthesis; L-histidine biosynthesis; L-histidine from 5-phospho-alpha-D-ribose 1-diphosphate: step 9/9. Its function is as follows. Catalyzes the sequential NAD-dependent oxidations of L-histidinol to L-histidinaldehyde and then to L-histidine. This chain is Histidinol dehydrogenase, found in Cereibacter sphaeroides (strain ATCC 17023 / DSM 158 / JCM 6121 / CCUG 31486 / LMG 2827 / NBRC 12203 / NCIMB 8253 / ATH 2.4.1.) (Rhodobacter sphaeroides).